Here is a 63-residue protein sequence, read N- to C-terminus: MKSERAKQIIDSKKYIPVYYKNTPVHIEKVDNKENIAHIKSLNTDKEIVVNVKTLSECNKLNN.

This sequence belongs to the SspH family.

Its subcellular location is the spore core. The protein is Small, acid-soluble spore protein H 2 of Clostridium botulinum (strain ATCC 19397 / Type A).